The chain runs to 272 residues: DNA repair protein RecO (272 aa).

Belongs to the RecO family.

In terms of biological role, involved in DNA repair and RecF pathway recombination. This Limosilactobacillus fermentum (strain NBRC 3956 / LMG 18251) (Lactobacillus fermentum) protein is DNA repair protein RecO.